Here is an 87-residue protein sequence, read N- to C-terminus: Toxin Cll5c (87 aa).

Positions 1–19 (MNSLLMITACLVLFGTVWA) are cleaved as a signal peptide. The LCN-type CS-alpha/beta domain occupies 20–85 (KEGYLVNKST…TYPLPNKSCS (66 aa)). Disulfide bonds link C31–C84, C35–C60, C44–C65, and C48–C67. The propeptide at 86–87 (KK) is removed by a carboxypeptidase.

The protein belongs to the long (4 C-C) scorpion toxin superfamily. Sodium channel inhibitor family. Beta subfamily. Expressed by the venom gland.

The protein resides in the secreted. In terms of biological role, beta toxins bind voltage-independently at site-4 of sodium channels (Nav) and shift the voltage of activation toward more negative potentials thereby affecting sodium channel activation and promoting spontaneous and repetitive firing. This is Toxin Cll5c from Centruroides limpidus (Mexican scorpion).